Consider the following 151-residue polypeptide: FAD synthase (151 aa).

Residues 12–13 (TF), 17–20 (HPGH), Asp-97, and Tyr-125 contribute to the ATP site.

Belongs to the archaeal FAD synthase family. Homodimer. Requires a divalent metal cation as cofactor.

It catalyses the reaction FMN + ATP + H(+) = FAD + diphosphate. The protein operates within cofactor biosynthesis; FAD biosynthesis; FAD from FMN: step 1/1. Functionally, catalyzes the transfer of the AMP portion of ATP to flavin mononucleotide (FMN) to produce flavin adenine dinucleotide (FAD) coenzyme. The chain is FAD synthase from Methanocaldococcus sp. (strain FS406-22).